Here is a 436-residue protein sequence, read N- to C-terminus: MSWQGHEGPKVKLRSACDRCSANKVKCTQEKPECERCRLLSLPCNYSRSMRIGKPPKSRQRGLSNIDPKTLMGGTVTKKLRPCPSAPESACRGSFEDGDGGPWTETMTFEEMLSRPSPPPFAGPSHNSNRPTNMASTNQDQYYHDKGKHGETMDEMLQTLVPDSVQFIEFPNTAREDQKQHPELRSEEEYSDYRSKSLFEEGLARIAPDCAGGIMDVLYGEEALVQMPNLPSSTHEGSSNTHVTSSHNCTRAVMENLAKLYQVCAPAGVENGSHPTTDQVLKANSDAMKDAADLLACPCAKDFCFPIILGITACRVLAWYQVVIDMYDPEIPMATMPTAREDIKHCPIAFGAYQLDEEVSQAMTSQFVLRNLRAMTRFVKTYVENFCSDINKNRPGSCSLIYRSLGTFMQTRLGNTIEQLEDRLAAFDGEYTKNIG.

A DNA-binding region (zn(2)-C6 fungal-type) is located at residues 17-44 (CDRCSANKVKCTQEKPECERCRLLSLPC). 2 disordered regions span residues 51 to 147 (RIGK…HDKG) and 173 to 192 (TARE…EYSD). Residues 125–141 (SHNSNRPTNMASTNQDQ) are compositionally biased toward polar residues. The segment covering 174 to 192 (AREDQKQHPELRSEEEYSD) has biased composition (basic and acidic residues).

Its subcellular location is the nucleus. Its function is as follows. Transcription factor that regulates expression of the viriditoxin biosynthesis cluster and viriditoxin synthesis. This Byssochlamys spectabilis (Paecilomyces variotii) protein is Transcriptional regulator VdtR.